The primary structure comprises 239 residues: Ribonuclease PH (239 aa).

Residues arginine 87 and 125–127 (GTR) each bind phosphate.

The protein belongs to the RNase PH family. As to quaternary structure, homohexameric ring arranged as a trimer of dimers.

It carries out the reaction tRNA(n+1) + phosphate = tRNA(n) + a ribonucleoside 5'-diphosphate. Phosphorolytic 3'-5' exoribonuclease that plays an important role in tRNA 3'-end maturation. Removes nucleotide residues following the 3'-CCA terminus of tRNAs; can also add nucleotides to the ends of RNA molecules by using nucleoside diphosphates as substrates, but this may not be physiologically important. Probably plays a role in initiation of 16S rRNA degradation (leading to ribosome degradation) during starvation. The sequence is that of Ribonuclease PH from Syntrophomonas wolfei subsp. wolfei (strain DSM 2245B / Goettingen).